We begin with the raw amino-acid sequence, 448 residues long: Glutamyl-tRNA reductase (448 aa).

Residues 49–52 (TCNR), Ser-109, 114–116 (ETQ), and Gln-120 each bind substrate. Cys-50 functions as the Nucleophile in the catalytic mechanism. 189 to 194 (GAGEMG) is an NADP(+) binding site.

Belongs to the glutamyl-tRNA reductase family. Homodimer.

It carries out the reaction (S)-4-amino-5-oxopentanoate + tRNA(Glu) + NADP(+) = L-glutamyl-tRNA(Glu) + NADPH + H(+). The protein operates within porphyrin-containing compound metabolism; protoporphyrin-IX biosynthesis; 5-aminolevulinate from L-glutamyl-tRNA(Glu): step 1/2. Its function is as follows. Catalyzes the NADPH-dependent reduction of glutamyl-tRNA(Glu) to glutamate 1-semialdehyde (GSA). The sequence is that of Glutamyl-tRNA reductase from Staphylococcus epidermidis (strain ATCC 12228 / FDA PCI 1200).